Reading from the N-terminus, the 102-residue chain is Flagellar hook-basal body complex protein FliE (102 aa).

It belongs to the FliE family.

The protein resides in the bacterial flagellum basal body. The sequence is that of Flagellar hook-basal body complex protein FliE from Oceanobacillus iheyensis (strain DSM 14371 / CIP 107618 / JCM 11309 / KCTC 3954 / HTE831).